A 543-amino-acid chain; its full sequence is Cytochrome P450 1B1 (543 aa).

Cys470 provides a ligand contact to heme.

This sequence belongs to the cytochrome P450 family. It depends on heme as a cofactor. In terms of tissue distribution, expressed in heart, brain, lung, skeletal muscle, kidney, spleen, thymus, prostate, testis, ovary, small intestine, colon, and peripheral blood leukocytes. Expressed in retinal endothelial cells and umbilical vein endothelial cells (at protein level).

The protein localises to the endoplasmic reticulum membrane. Its subcellular location is the microsome membrane. The protein resides in the mitochondrion. The enzyme catalyses an organic molecule + reduced [NADPH--hemoprotein reductase] + O2 = an alcohol + oxidized [NADPH--hemoprotein reductase] + H2O + H(+). It catalyses the reaction 17beta-estradiol + reduced [NADPH--hemoprotein reductase] + O2 = 2-hydroxy-17beta-estradiol + oxidized [NADPH--hemoprotein reductase] + H2O + H(+). It carries out the reaction 17beta-estradiol + reduced [NADPH--hemoprotein reductase] + O2 = 4-hydroxy-17beta-estradiol + oxidized [NADPH--hemoprotein reductase] + H2O + H(+). The catalysed reaction is estrone + reduced [NADPH--hemoprotein reductase] + O2 = 2-hydroxyestrone + oxidized [NADPH--hemoprotein reductase] + H2O + H(+). The enzyme catalyses estrone + reduced [NADPH--hemoprotein reductase] + O2 = 4-hydroxyestrone + oxidized [NADPH--hemoprotein reductase] + H2O + H(+). It catalyses the reaction testosterone + reduced [NADPH--hemoprotein reductase] + O2 = 6beta,17beta-dihydroxyandrost-4-en-3-one + oxidized [NADPH--hemoprotein reductase] + H2O + H(+). It carries out the reaction progesterone + reduced [NADPH--hemoprotein reductase] + O2 = 6beta-hydroxyprogesterone + oxidized [NADPH--hemoprotein reductase] + H2O + H(+). The catalysed reaction is progesterone + reduced [NADPH--hemoprotein reductase] + O2 = 16alpha-hydroxyprogesterone + oxidized [NADPH--hemoprotein reductase] + H2O + H(+). The enzyme catalyses all-trans-retinol + reduced [NADPH--hemoprotein reductase] + O2 = all-trans-retinal + oxidized [NADPH--hemoprotein reductase] + 2 H2O + H(+). It catalyses the reaction all-trans-retinal + reduced [NADPH--hemoprotein reductase] + O2 = all-trans-retinoate + oxidized [NADPH--hemoprotein reductase] + H2O + 2 H(+). It carries out the reaction (5Z,8Z,11Z,14Z)-eicosatetraenoate + reduced [NADPH--hemoprotein reductase] + O2 = (8R,9S)-epoxy-(5Z,11Z,14Z)-eicosatrienoate + oxidized [NADPH--hemoprotein reductase] + H2O + H(+). The catalysed reaction is (5Z,8Z,11Z,14Z)-eicosatetraenoate + reduced [NADPH--hemoprotein reductase] + O2 = (11R,12S)-epoxy-(5Z,8Z,14Z)-eicosatrienoate + oxidized [NADPH--hemoprotein reductase] + H2O + H(+). The enzyme catalyses (5Z,8Z,11Z,14Z)-eicosatetraenoate + reduced [NADPH--hemoprotein reductase] + O2 = (11S,12R)-epoxy-(5Z,8Z,14Z)-eicosatrienoate + oxidized [NADPH--hemoprotein reductase] + H2O + H(+). It catalyses the reaction (5Z,8Z,11Z,14Z)-eicosatetraenoate + reduced [NADPH--hemoprotein reductase] + O2 = (14R,15S)-epoxy-(5Z,8Z,11Z)-eicosatrienoate + oxidized [NADPH--hemoprotein reductase] + H2O + H(+). It carries out the reaction (5S)-hydroperoxy-(6E,8Z,11Z,14Z)-eicosatetraenoate = 5-oxo-(6E,8Z,11Z,14Z)-eicosatetraenoate + H2O. The catalysed reaction is (12S)-hydroperoxy-(5Z,8Z,10E,14Z)-eicosatetraenoate = 12-oxo-(5Z,8Z,10E,14Z)-eicosatetraenoate + H2O. The enzyme catalyses (13S)-hydroperoxy-(9Z,11E)-octadecadienoate = 13-oxo-(9Z,11E)-octadecadienoate + H2O. It catalyses the reaction (15S)-hydroperoxy-(5Z,8Z,11Z,13E)-eicosatetraenoate = 15-oxo-(5Z,8Z,11Z,13E)-eicosatetraenoate + H2O. It functions in the pathway steroid hormone biosynthesis. The protein operates within cofactor metabolism; retinol metabolism. It participates in lipid metabolism; arachidonate metabolism. With respect to regulation, enzyme activity is increased by liposomes containing anionic phospholipids, phosphatidic acid and cardiolipin. Inhibited by naringenin with an IC(50) of 5 uM. Enzyme activity is increased by cytochrome b5. In terms of biological role, a cytochrome P450 monooxygenase involved in the metabolism of various endogenous substrates, including fatty acids, steroid hormones and vitamins. Mechanistically, uses molecular oxygen inserting one oxygen atom into a substrate, and reducing the second into a water molecule, with two electrons provided by NADPH via cytochrome P450 reductase (NADPH--hemoprotein reductase). Exhibits catalytic activity for the formation of hydroxyestrogens from estrone (E1) and 17beta-estradiol (E2), namely 2- and 4-hydroxy E1 and E2. Displays a predominant hydroxylase activity toward E2 at the C-4 position. Metabolizes testosterone and progesterone to B or D ring hydroxylated metabolites. May act as a major enzyme for all-trans retinoic acid biosynthesis in extrahepatic tissues. Catalyzes two successive oxidative transformation of all-trans retinol to all-trans retinal and then to the active form all-trans retinoic acid. Catalyzes the epoxidation of double bonds of certain PUFA. Converts arachidonic acid toward epoxyeicosatrienoic acid (EpETrE) regioisomers, 8,9-, 11,12-, and 14,15- EpETrE, that function as lipid mediators in the vascular system. Additionally, displays dehydratase activity toward oxygenated eicosanoids hydroperoxyeicosatetraenoates (HpETEs). This activity is independent of cytochrome P450 reductase, NADPH, and O2. Also involved in the oxidative metabolism of xenobiotics, particularly converting polycyclic aromatic hydrocarbons and heterocyclic aryl amines procarcinogens to DNA-damaging products. Plays an important role in retinal vascular development. Under hyperoxic O2 conditions, promotes retinal angiogenesis and capillary morphogenesis, likely by metabolizing the oxygenated products generated during the oxidative stress. Also, contributes to oxidative homeostasis and ultrastructural organization and function of trabecular meshwork tissue through modulation of POSTN expression. This is Cytochrome P450 1B1 from Homo sapiens (Human).